We begin with the raw amino-acid sequence, 180 residues long: Bifunctional protein PyrR (180 aa).

The PRPP-binding signature appears at 101 to 113 (VILVDDVLYTGRT).

The protein belongs to the purine/pyrimidine phosphoribosyltransferase family. PyrR subfamily. In terms of assembly, homodimer and homohexamer; in equilibrium.

The catalysed reaction is UMP + diphosphate = 5-phospho-alpha-D-ribose 1-diphosphate + uracil. Its function is as follows. Regulates transcriptional attenuation of the pyrimidine nucleotide (pyr) operon by binding in a uridine-dependent manner to specific sites on pyr mRNA. This disrupts an antiterminator hairpin in the RNA and favors formation of a downstream transcription terminator, leading to a reduced expression of downstream genes. Functionally, also displays a weak uracil phosphoribosyltransferase activity which is not physiologically significant. This Bacillus cereus (strain ATCC 14579 / DSM 31 / CCUG 7414 / JCM 2152 / NBRC 15305 / NCIMB 9373 / NCTC 2599 / NRRL B-3711) protein is Bifunctional protein PyrR.